We begin with the raw amino-acid sequence, 363 residues long: MASSHVAGVEIAEAVPLAPLTTLRIGPVARRMLTCTSTEQLIGVLRALTADDEPLLILAGGSNVVLADDLTDLTVVRIANTEITVDGDRVRAEAGALWDDVVVTSLAHGLGGLECLSGIPGSAGATPVQNVGAYGAEVADTITRVRLLDRRTGEDRWATTEELRFGYRTSVLKHSDAVIVLEVEFGLDAAGRSAPVRYRELATALGVEPGERTDPLRVRDAVLRLRTGKGMVVDPDPDHPDHDTWSVGSFFTNPVVTHADFERVERIARDAGAGPVPNYPAPDGVKLAAGWLVERAGFGKGYPGEGARARLSTKHALALTNRGQATTADVMALAGTVRAGVLDVFGIELTPEPILLGCVLSVP.

Residues 25–201 enclose the FAD-binding PCMH-type domain; it reads IGPVARRMLT…RSAPVRYREL (177 aa). Arginine 168 is a catalytic residue. The Proton donor role is filled by serine 249. Glutamate 352 is a catalytic residue.

Belongs to the MurB family. It depends on FAD as a cofactor.

The protein localises to the cytoplasm. The catalysed reaction is UDP-N-acetyl-alpha-D-muramate + NADP(+) = UDP-N-acetyl-3-O-(1-carboxyvinyl)-alpha-D-glucosamine + NADPH + H(+). Its pathway is cell wall biogenesis; peptidoglycan biosynthesis. Its function is as follows. Cell wall formation. The protein is UDP-N-acetylenolpyruvoylglucosamine reductase of Mycolicibacterium smegmatis (strain ATCC 700084 / mc(2)155) (Mycobacterium smegmatis).